A 418-amino-acid polypeptide reads, in one-letter code: Delta(14)-sterol reductase TM7SF2 (418 aa).

A run of 6 helical transmembrane segments spans residues 13–35 (FGGPLGAAALLLLLPATMFHLLL), 62–81 (ALLLWLAWLGLQAALYLLPA), 102–124 (GFQALVLTALLVGLGMSAGLPLG), 129–148 (MLLPLAFVATLTAFIFSLFL), 255–277 (FGFMLAFGDMAWVPFTYSLQAQF), and 287–304 (LPMASVICLINATGYYIF). NADP(+) is bound by residues lysine 311, arginine 315, leucine 338, tryptophan 343, and 350 to 351 (NY). A helical transmembrane segment spans residues 355 to 377 (LIMALAWSLPCGVSHLLPYFYLL). Residues aspartate 390, 394–398 (CLQKY), and tyrosine 405 each bind NADP(+).

This sequence belongs to the ERG4/ERG24 family. As to expression, expressed in adult heart, brain, pancreas, lung, liver, skeletal muscle, kidney, ovary, prostate, testis and adrenal gland, but not detected in placenta, spleen, thymus, small intestine, colon (mucosal lining), or peripheral blood leukocytes.

Its subcellular location is the microsome membrane. The protein localises to the endoplasmic reticulum membrane. It catalyses the reaction 4,4-dimethyl-5alpha-cholesta-8,24-dien-3beta-ol + NADP(+) = 4,4-dimethyl-5alpha-cholesta-8,14,24-trien-3beta-ol + NADPH + H(+). It carries out the reaction 5alpha-cholest-8,14-dien-3beta-ol + NADPH + H(+) = 5alpha-cholest-8-en-3beta-ol + NADP(+). The enzyme catalyses 4,4-dimethyl-8,14-cholestadien-3beta-ol + NADPH + H(+) = 4,4-dimethyl-5alpha-cholest-8-en-3beta-ol + NADP(+). It functions in the pathway steroid biosynthesis; cholesterol biosynthesis. Functionally, catalyzes the reduction of the C14-unsaturated bond of lanosterol, as part of the metabolic pathway leading to cholesterol biosynthesis. In Homo sapiens (Human), this protein is Delta(14)-sterol reductase TM7SF2 (TM7SF2).